Reading from the N-terminus, the 492-residue chain is NAD(P)H-quinone oxidoreductase subunit 2 A, chloroplastic (492 aa).

13 helical membrane-spanning segments follow: residues 6-26 (LLLFDGSLIFPECILIFGLIL), 39-59 (ISWFYFISSTSLVMSITALLF), 81-101 (IFQFLILLCSTLCIPLSVEYI), 106-126 (MAITEFLLFILTTTLGGMFLC), 131-151 (LITIFVALECFSLCSYLLSGY), 165-185 (YLLMGGASSSILVHGFSWLYG), 209-229 (PGILIALLFITVGIGFKLSPA), 277-297 (WHLLLEILAILSMILGNLIAI), 305-325 (MLAYSSIGQIGYVIIGIIVGD), 336-356 (YMLFYISMNLGTFACIVSFGL), 377-397 (ALSLALCLLSLGGLPPLAGFF), 400-420 (LHLFWCGWQAGLYFLVSIGLL), and 464-484 (FSMIVCVIASTIPGISMNPII).

The protein belongs to the complex I subunit 2 family. As to quaternary structure, NDH is composed of at least 16 different subunits, 5 of which are encoded in the nucleus.

Its subcellular location is the plastid. The protein resides in the chloroplast thylakoid membrane. It carries out the reaction a plastoquinone + NADH + (n+1) H(+)(in) = a plastoquinol + NAD(+) + n H(+)(out). The catalysed reaction is a plastoquinone + NADPH + (n+1) H(+)(in) = a plastoquinol + NADP(+) + n H(+)(out). NDH shuttles electrons from NAD(P)H:plastoquinone, via FMN and iron-sulfur (Fe-S) centers, to quinones in the photosynthetic chain and possibly in a chloroplast respiratory chain. The immediate electron acceptor for the enzyme in this species is believed to be plastoquinone. Couples the redox reaction to proton translocation, and thus conserves the redox energy in a proton gradient. This is NAD(P)H-quinone oxidoreductase subunit 2 A, chloroplastic from Phaseolus vulgaris (Kidney bean).